Here is a 445-residue protein sequence, read N- to C-terminus: 23S rRNA (uracil(1939)-C(5))-methyltransferase RlmD (445 aa).

The interval 1 to 21 (MARRRKQLPETPEPASIETLS) is disordered. The region spanning 5–64 (RKQLPETPEPASIETLSHDGRGIARRDGKTTFIDNALPGEEVMFKFTYMRRKFDEGKAVE) is the TRAM domain. [4Fe-4S] cluster-binding residues include cysteine 77, cysteine 83, cysteine 86, and cysteine 165. Positions 275, 304, 309, 325, 352, and 373 each coordinate S-adenosyl-L-methionine. Cysteine 399 functions as the Nucleophile in the catalytic mechanism.

Belongs to the class I-like SAM-binding methyltransferase superfamily. RNA M5U methyltransferase family. RlmD subfamily.

The enzyme catalyses uridine(1939) in 23S rRNA + S-adenosyl-L-methionine = 5-methyluridine(1939) in 23S rRNA + S-adenosyl-L-homocysteine + H(+). Catalyzes the formation of 5-methyl-uridine at position 1939 (m5U1939) in 23S rRNA. The sequence is that of 23S rRNA (uracil(1939)-C(5))-methyltransferase RlmD from Alcanivorax borkumensis (strain ATCC 700651 / DSM 11573 / NCIMB 13689 / SK2).